A 214-amino-acid polypeptide reads, in one-letter code: Threonylcarbamoyl-AMP synthase (214 aa).

In terms of domain architecture, YrdC-like spans 9 to 214; the sequence is TDSVIQAAHW…GDALTGQIIR (206 aa).

This sequence belongs to the SUA5 family. TsaC subfamily.

The protein localises to the cytoplasm. The enzyme catalyses L-threonine + hydrogencarbonate + ATP = L-threonylcarbamoyladenylate + diphosphate + H2O. Required for the formation of a threonylcarbamoyl group on adenosine at position 37 (t(6)A37) in tRNAs that read codons beginning with adenine. Catalyzes the conversion of L-threonine, HCO(3)(-)/CO(2) and ATP to give threonylcarbamoyl-AMP (TC-AMP) as the acyladenylate intermediate, with the release of diphosphate. This chain is Threonylcarbamoyl-AMP synthase, found in Psychrobacter arcticus (strain DSM 17307 / VKM B-2377 / 273-4).